The following is a 300-amino-acid chain: 33 kDa chaperonin (300 aa).

2 cysteine pairs are disulfide-bonded: Cys240/Cys242 and Cys273/Cys276.

The protein belongs to the HSP33 family. In terms of processing, under oxidizing conditions two disulfide bonds are formed involving the reactive cysteines. Under reducing conditions zinc is bound to the reactive cysteines and the protein is inactive.

The protein resides in the cytoplasm. Its function is as follows. Redox regulated molecular chaperone. Protects both thermally unfolding and oxidatively damaged proteins from irreversible aggregation. Plays an important role in the bacterial defense system toward oxidative stress. The protein is 33 kDa chaperonin of Cyanothece sp. (strain PCC 7425 / ATCC 29141).